We begin with the raw amino-acid sequence, 936 residues long: Bifunctional uridylyltransferase/uridylyl-removing enzyme (936 aa).

The uridylyltransferase stretch occupies residues 1 to 372; the sequence is MTIPRIRQPR…SIATLLMRKR (372 aa). The uridylyl-removing stretch occupies residues 373–727; the sequence is NLGDFVLDGG…VLPDPERAVS (355 aa). One can recognise an HD domain in the interval 488 to 610; the sequence is TDEHTIRAIG…VQSVERLHLL (123 aa). ACT domains are found at residues 728–809 and 840–915; these read EVLV…KALR and VIEI…TVPR. The segment covering 915–930 has biased composition (basic and acidic residues); sequence RKVEEGAEQGAEKADA. The interval 915–936 is disordered; that stretch reads RKVEEGAEQGAEKADAGEIVAA.

Belongs to the GlnD family. The cofactor is Mg(2+).

It catalyses the reaction [protein-PII]-L-tyrosine + UTP = [protein-PII]-uridylyl-L-tyrosine + diphosphate. The enzyme catalyses [protein-PII]-uridylyl-L-tyrosine + H2O = [protein-PII]-L-tyrosine + UMP + H(+). Its activity is regulated as follows. Uridylyltransferase (UTase) activity is inhibited by glutamine, while glutamine activates uridylyl-removing (UR) activity. Its function is as follows. Modifies, by uridylylation and deuridylylation, the PII regulatory proteins (GlnB and homologs), in response to the nitrogen status of the cell that GlnD senses through the glutamine level. Under low glutamine levels, catalyzes the conversion of the PII proteins and UTP to PII-UMP and PPi, while under higher glutamine levels, GlnD hydrolyzes PII-UMP to PII and UMP (deuridylylation). Thus, controls uridylylation state and activity of the PII proteins, and plays an important role in the regulation of nitrogen fixation and metabolism. The protein is Bifunctional uridylyltransferase/uridylyl-removing enzyme of Rhodospirillum rubrum (strain ATCC 11170 / ATH 1.1.1 / DSM 467 / LMG 4362 / NCIMB 8255 / S1).